The sequence spans 75 residues: Calhepatin (75 aa).

Serine 1 is subject to N-acetylserine. EF-hand domains lie at 2–37 (ADEQ…VHPK) and 38–73 (VSRN…LADL). Residues aspartate 15, aspartate 17, serine 19, threonine 21, glutamate 26, aspartate 51, asparagine 53, aspartate 55, glutamine 57, and glutamate 62 each coordinate Ca(2+).

In terms of assembly, monomer and homodimer. Liver, and to a much lower level intestine.

Its function is as follows. Binds both calcium and copper, but not zinc. May be involved in calcium signal transduction. The sequence is that of Calhepatin from Lepidosiren paradoxus (South American lungfish).